A 78-amino-acid chain; its full sequence is MSAYCQVTGRKPSFGKSVSHSHRRTNRRWNPNIQRRTFYLPSEGRSITLNVSTKGLKTIDRDGIESVVAKIRARGEKI.

Residues 1–26 (MSAYCQVTGRKPSFGKSVSHSHRRTN) form a disordered region.

This sequence belongs to the bacterial ribosomal protein bL28 family.

This Corynebacterium jeikeium (strain K411) protein is Large ribosomal subunit protein bL28.